Consider the following 525-residue polypeptide: Glutamate--cysteine ligase (525 aa).

Belongs to the glutamate--cysteine ligase type 1 family. Type 1 subfamily.

The enzyme catalyses L-cysteine + L-glutamate + ATP = gamma-L-glutamyl-L-cysteine + ADP + phosphate + H(+). The protein operates within sulfur metabolism; glutathione biosynthesis; glutathione from L-cysteine and L-glutamate: step 1/2. The chain is Glutamate--cysteine ligase from Vibrio vulnificus (strain CMCP6).